Reading from the N-terminus, the 565-residue chain is E3 ubiquitin-protein ligase ipaH7.8 (565 aa).

Residues 1-22 (MFSVNNTHSSVSCSPSINSNST) form a disordered region. Residues 1–262 (MFSVNNTHSS…YHGPQIYFSM (262 aa)) form an interaction with target proteins region. Positions 9–22 (SSVSCSPSINSNST) are enriched in low complexity. LRR repeat units follow at residues 58–79 (QEAV…PKHI), 80–97 (SALI…KLPA), 98–119 (FLKE…PESL), 120–137 (TTLS…VLPN), 138–157 (HLTS…ALPE), 158–179 (KLKF…PDKL), 180–199 (EILC…SDRN), 202–223 (RQKE…FSQL), and 225–248 (SSYR…QRLT). Residues 263–270 (SDGQQNTL) form a linker region. The segment at 271 to 565 (HRPLADAVTA…SENGSRLHHS (295 aa)) is E3 ubiquitin-protein ligase catalytic domain. Positions 273 to 565 (PLADAVTAWF…SENGSRLHHS (293 aa)) constitute an NEL domain. The active-site Glycyl thioester intermediate is the Cys-357.

It belongs to the LRR-containing bacterial E3 ligase family. Ubiquitinated in the presence of host E1 ubiquitin-activating enzyme, E2 ubiquitin-conjugating enzyme and ubiquitin.

The protein resides in the secreted. Its subcellular location is the host cytoplasm. The catalysed reaction is S-ubiquitinyl-[E2 ubiquitin-conjugating enzyme]-L-cysteine + [acceptor protein]-L-lysine = [E2 ubiquitin-conjugating enzyme]-L-cysteine + N(6)-ubiquitinyl-[acceptor protein]-L-lysine.. It participates in protein modification; protein ubiquitination. In terms of biological role, E3 ubiquitin ligase effector protein that interferes with host's innate immunity. Functions to alter host cell physiology and promote bacterial survival in host tissues. Catalyzes ubiquitination of human gasdermins GSDMB and GSDMD, promoting their degradation by the proteasome, thereby preventing cell death. In contrast, activates host cell pyroptosis in mouse cells: catalyzes ubiquitination of mouse Nlrp1b allele 1 protein, releasing the cleaved C-terminal part of Nlrp1b, which polymerizes and forms the Nlrp1b inflammasome followed by host cell pyroptosis. Does not catalyze ubiquitination of mouse GSDMD. The protein is E3 ubiquitin-protein ligase ipaH7.8 of Shigella flexneri.